The primary structure comprises 451 residues: MNKMKNFKRRLSLSVPRPETIEESLTEFTEQFNQLHTQRNEDGRDEPGQLSPGVQYQQRQNQRRFSMEDLNKRLSLPMDIRLPQEFLQKLQLENPGLPKPLTRMSRRASLSDIGFGKLETYVKLDKLGEGTYATVFKGRSKLTENLVALKEIRLEHEEGAPCTAIREVSLLKDLKHANIVTLHDLIHTDRSLTLVFEYLDSDLKQYLDHCGNLMNMHNVKIFMFQLLRGLAYCHRRKILHRDLKPQNLLINERGELKLADFGLARAKSVPTKTYSNEVVTLWYRPPDVLLGSTEYSTPIDMWGVGCILYEMATGKPLFPGSTVKEELHLIFRLLGTPTEESWPGVTSISEFRAYNFPRYLPQPLLSHAPRLDTEGINLLTSLLLYESKSRMSAEAALSHPYFQSLGERVHQLDDTASIFSLKEIQLQKDPGYRGLAFQHPGRGKSRRQSIF.

A disordered region spans residues 39–61 (RNEDGRDEPGQLSPGVQYQQRQN). Ser51 carries the post-translational modification Phosphoserine. Polar residues predominate over residues 52 to 61 (PGVQYQQRQN). A phosphoserine mark is found at Ser66 and Ser109. The 282-residue stretch at 121–402 (YVKLDKLGEG…AEAALSHPYF (282 aa)) folds into the Protein kinase domain. ATP is bound by residues 127-135 (LGEGTYATV) and Lys150. The active-site Proton acceptor is the Asp242. Ser417 and Ser420 each carry phosphoserine.

It belongs to the protein kinase superfamily. CMGC Ser/Thr protein kinase family. CDC2/CDKX subfamily. As to expression, in brain, kidney, intestine and at a much lower level, in fetal tissues.

The catalysed reaction is L-seryl-[protein] + ATP = O-phospho-L-seryl-[protein] + ADP + H(+). It carries out the reaction L-threonyl-[protein] + ATP = O-phospho-L-threonyl-[protein] + ADP + H(+). Its function is as follows. May play a role in signal transduction cascades in terminally differentiated cells. The polypeptide is Cyclin-dependent kinase 18 (Cdk18) (Rattus norvegicus (Rat)).